Here is an 865-residue protein sequence, read N- to C-terminus: Aconitate hydratase B (865 aa).

Residues arginine 191, 244–246 (SSR), 414–416 (QDT), and serine 498 contribute to the substrate site. The [4Fe-4S] cluster site is built by cysteine 710, cysteine 769, and cysteine 772. Substrate contacts are provided by arginine 791 and arginine 796.

This sequence belongs to the aconitase/IPM isomerase family. As to quaternary structure, monomer. Requires [4Fe-4S] cluster as cofactor.

It carries out the reaction citrate = D-threo-isocitrate. It catalyses the reaction (2S,3R)-3-hydroxybutane-1,2,3-tricarboxylate = 2-methyl-cis-aconitate + H2O. Its pathway is carbohydrate metabolism; tricarboxylic acid cycle; isocitrate from oxaloacetate: step 2/2. It functions in the pathway organic acid metabolism; propanoate degradation. Its function is as follows. Involved in the catabolism of short chain fatty acids (SCFA) via the tricarboxylic acid (TCA)(acetyl degradation route) and the 2-methylcitrate cycle I (propionate degradation route). Catalyzes the reversible isomerization of citrate to isocitrate via cis-aconitate. Also catalyzes the hydration of 2-methyl-cis-aconitate to yield (2R,3S)-2-methylisocitrate. The apo form of AcnB functions as a RNA-binding regulatory protein which regulates FliC synthesis via interaction with the ftsH transcript to decrease the intracellular levels of FtsH. The lower levels of FtsH protease activity then influence sigma-32, DnaK and ultimately FliC production. The polypeptide is Aconitate hydratase B (acnB) (Salmonella typhimurium (strain LT2 / SGSC1412 / ATCC 700720)).